The sequence spans 113 residues: UPF0145 protein SynWH7803_1684 (113 aa).

The protein belongs to the UPF0145 family.

The sequence is that of UPF0145 protein SynWH7803_1684 from Synechococcus sp. (strain WH7803).